The chain runs to 198 residues: Na(+)-translocating NADH-quinone reductase subunit E (198 aa).

6 helical membrane passes run 11 to 31 (SIFIENLALSFFLGMCTFLAV), 39 to 59 (MGLGIAVIVVQTVAVPANNLI), 77 to 97 (FLSFITFIGVIAALVQILEMA), 110 to 130 (GIFLPLITVNCAIFGGVSFMV), 140 to 160 (VVYGVGSGAGWMLAIVAMAGI), and 176 to 196 (LGITFITAGLMALGFMSFSGI).

This sequence belongs to the NqrDE/RnfAE family. As to quaternary structure, composed of six subunits; NqrA, NqrB, NqrC, NqrD, NqrE and NqrF.

The protein resides in the cell inner membrane. The catalysed reaction is a ubiquinone + n Na(+)(in) + NADH + H(+) = a ubiquinol + n Na(+)(out) + NAD(+). Its function is as follows. NQR complex catalyzes the reduction of ubiquinone-1 to ubiquinol by two successive reactions, coupled with the transport of Na(+) ions from the cytoplasm to the periplasm. NqrA to NqrE are probably involved in the second step, the conversion of ubisemiquinone to ubiquinol. The sequence is that of Na(+)-translocating NADH-quinone reductase subunit E from Aeromonas salmonicida (strain A449).